A 328-amino-acid chain; its full sequence is Transcription factor bHLH25 (328 aa).

Positions 125 to 152 are disordered; sequence PHQKSDEFNRKGTKRAQPFSRNQSNAQD. The region spanning 148 to 197 is the bHLH domain; that stretch reads SNAQDHIIAERKRREKLTQRFVALSALVPGLKKMDKASVLGDALKHIKYL.

In terms of assembly, homodimer. In terms of tissue distribution, expressed in flowers.

The protein resides in the nucleus. This is Transcription factor bHLH25 (BHLH25) from Arabidopsis thaliana (Mouse-ear cress).